The sequence spans 479 residues: Aspartyl/glutamyl-tRNA(Asn/Gln) amidotransferase subunit B (479 aa).

It belongs to the GatB/GatE family. GatB subfamily. As to quaternary structure, heterotrimer of A, B and C subunits.

The enzyme catalyses L-glutamyl-tRNA(Gln) + L-glutamine + ATP + H2O = L-glutaminyl-tRNA(Gln) + L-glutamate + ADP + phosphate + H(+). It carries out the reaction L-aspartyl-tRNA(Asn) + L-glutamine + ATP + H2O = L-asparaginyl-tRNA(Asn) + L-glutamate + ADP + phosphate + 2 H(+). Allows the formation of correctly charged Asn-tRNA(Asn) or Gln-tRNA(Gln) through the transamidation of misacylated Asp-tRNA(Asn) or Glu-tRNA(Gln) in organisms which lack either or both of asparaginyl-tRNA or glutaminyl-tRNA synthetases. The reaction takes place in the presence of glutamine and ATP through an activated phospho-Asp-tRNA(Asn) or phospho-Glu-tRNA(Gln). This is Aspartyl/glutamyl-tRNA(Asn/Gln) amidotransferase subunit B from Streptococcus pyogenes serotype M4 (strain MGAS10750).